The following is a 91-amino-acid chain: uncharacterized protein (91 aa).

This is an uncharacterized protein from Saccharolobus islandicus (Sulfolobus islandicus).